The chain runs to 353 residues: Methionine import ATP-binding protein MetN (353 aa).

One can recognise an ABC transporter domain in the interval 11 to 251 (ITFDRVEKSF…PEHPTTRSFL (241 aa)). An ATP-binding site is contributed by 48–55 (GRSGAGKS).

Belongs to the ABC transporter superfamily. Methionine importer (TC 3.A.1.24) family. As to quaternary structure, the complex is composed of two ATP-binding proteins (MetN), two transmembrane proteins (MetI) and a solute-binding protein (MetQ).

The protein resides in the cell inner membrane. It catalyses the reaction L-methionine(out) + ATP + H2O = L-methionine(in) + ADP + phosphate + H(+). The catalysed reaction is D-methionine(out) + ATP + H2O = D-methionine(in) + ADP + phosphate + H(+). In terms of biological role, part of the ABC transporter complex MetNIQ involved in methionine import. Responsible for energy coupling to the transport system. The protein is Methionine import ATP-binding protein MetN of Cereibacter sphaeroides (strain ATCC 17023 / DSM 158 / JCM 6121 / CCUG 31486 / LMG 2827 / NBRC 12203 / NCIMB 8253 / ATH 2.4.1.) (Rhodobacter sphaeroides).